Here is a 286-residue protein sequence, read N- to C-terminus: Polyamine aminopropyltransferase (286 aa).

The PABS domain occupies 9–242; sequence NGWIDEHHQG…GWWSWTFAAI (234 aa). Position 36 (Q36) interacts with S-methyl-5'-thioadenosine. Positions 67 and 91 each coordinate spermidine. Residues E111 and 143–144 contribute to the S-methyl-5'-thioadenosine site; that span reads NG. The Proton acceptor role is filled by D162. P169 provides a ligand contact to S-methyl-5'-thioadenosine.

The protein belongs to the spermidine/spermine synthase family. In terms of assembly, homodimer or homotetramer.

The protein localises to the cytoplasm. The enzyme catalyses S-adenosyl 3-(methylsulfanyl)propylamine + putrescine = S-methyl-5'-thioadenosine + spermidine + H(+). It functions in the pathway amine and polyamine biosynthesis; spermidine biosynthesis; spermidine from putrescine: step 1/1. In terms of biological role, catalyzes the irreversible transfer of a propylamine group from the amino donor S-adenosylmethioninamine (decarboxy-AdoMet) to putrescine (1,4-diaminobutane) to yield spermidine. This is Polyamine aminopropyltransferase from Prochlorococcus marinus (strain MIT 9313).